The chain runs to 178 residues: MPGSALLCCLALLAGVKASQGTNTQSEDSCAHFPAGLPHMLRELRAAFGRVKTFFQTQDQLDNVLLNKSLLEDFKGYLGCQALSEMIQFYLVEVMPQAEKHGPEIKEHLNSLGEKLKTLRMRLRRCHRFLPCENKSKAVEQVKSDFNKLQDQGVYKAMNEFDIFINCIEAYMMIKMKS.

Residues 1–18 form the signal peptide; that stretch reads MPGSALLCCLALLAGVKA. 2 disulfide bridges follow: C30–C126 and C80–C132. An N-linked (GlcNAc...) asparagine glycan is attached at N67. N134 carries N-linked (GlcNAc...) asparagine glycosylation.

The protein belongs to the IL-10 family. In terms of assembly, homodimer. Interacts with IL10RA and IL10RB.

It is found in the secreted. Its function is as follows. Major immune regulatory cytokine that acts on many cells of the immune system where it has profound anti-inflammatory functions, limiting excessive tissue disruption caused by inflammation. Mechanistically, IL10 binds to its heterotetrameric receptor comprising IL10RA and IL10RB leading to JAK1 and STAT2-mediated phosphorylation of STAT3. In turn, STAT3 translocates to the nucleus where it drives expression of anti-inflammatory mediators. Targets antigen-presenting cells (APCs) such as macrophages and monocytes and inhibits their release of pro-inflammatory cytokines including granulocyte-macrophage colony-stimulating factor /GM-CSF, granulocyte colony-stimulating factor/G-CSF, IL-1 alpha, IL-1 beta, IL-6, IL-8 and TNF-alpha. Also interferes with antigen presentation by reducing the expression of MHC-class II and co-stimulatory molecules, thereby inhibiting their ability to induce T cell activation. In addition, controls the inflammatory response of macrophages by reprogramming essential metabolic pathways including mTOR signaling. The chain is Interleukin-10 (IL10) from Cavia porcellus (Guinea pig).